The chain runs to 225 residues: Urease accessory protein UreF (225 aa).

This sequence belongs to the UreF family. As to quaternary structure, ureD, UreF and UreG form a complex that acts as a GTP-hydrolysis-dependent molecular chaperone, activating the urease apoprotein by helping to assemble the nickel containing metallocenter of UreC. The UreE protein probably delivers the nickel.

Its subcellular location is the cytoplasm. Functionally, required for maturation of urease via the functional incorporation of the urease nickel metallocenter. The protein is Urease accessory protein UreF of Geobacillus kaustophilus (strain HTA426).